A 1026-amino-acid chain; its full sequence is RecBCD enzyme subunit RecB (1026 aa).

The 438-residue stretch at 1–438 folds into the UvrD-like helicase ATP-binding domain; it reads MSSFDIFSPT…LILDTNYRST (438 aa). Positions 1–766 are DNA-binding and helicase activity, interacts with RecC; the sequence is MSSFDIFSPT…LANYANVTKH (766 aa). An ATP-binding site is contributed by 21-28; it reads ASAGTGKT. Residues 815–1026 are nuclease activity, interacts with RecD and RecA; the sequence is SRTIHSFSST…KGNGFLQPGR (212 aa). Mg(2+)-binding residues include His-854, Asp-940, and Asp-953. Asp-953 acts as the For nuclease activity in catalysis.

It belongs to the helicase family. UvrD subfamily. As to quaternary structure, heterotrimer of RecB, RecC and RecD. All subunits contribute to DNA-binding. Interacts with RecA. Mg(2+) is required as a cofactor.

The enzyme catalyses Exonucleolytic cleavage (in the presence of ATP) in either 5'- to 3'- or 3'- to 5'-direction to yield 5'-phosphooligonucleotides.. It catalyses the reaction Couples ATP hydrolysis with the unwinding of duplex DNA by translocating in the 3'-5' direction.. The catalysed reaction is ATP + H2O = ADP + phosphate + H(+). A helicase/nuclease that prepares dsDNA breaks (DSB) for recombinational DNA repair. Binds to DSBs and unwinds DNA via a highly rapid and processive ATP-dependent bidirectional helicase activity. Unwinds dsDNA until it encounters a Chi (crossover hotspot instigator) sequence from the 3' direction. Cuts ssDNA a few nucleotides 3' to the Chi site. The properties and activities of the enzyme are changed at Chi. The Chi-altered holoenzyme produces a long 3'-ssDNA overhang and facilitates RecA-binding to the ssDNA for homologous DNA recombination and repair. Holoenzyme degrades any linearized DNA that is unable to undergo homologous recombination. In the holoenzyme this subunit contributes ATPase, 3'-5' helicase, exonuclease activity and loads RecA onto ssDNA. This chain is RecBCD enzyme subunit RecB, found in Chlamydia trachomatis serovar D (strain ATCC VR-885 / DSM 19411 / UW-3/Cx).